The following is a 45-amino-acid chain: uncharacterized protein (45 aa).

A C2H2-type zinc finger spans residues 2-25 (YQCLRCGGIFNKRREVVEHLLVGH).

This is an uncharacterized protein from Sulfolobus spindle-shape virus 1 (SSV1).